Consider the following 288-residue polypeptide: Plasmodesmata-located protein 6 (288 aa).

A signal peptide spans 1 to 22 (MFATKTVLFIAVVSLLGTFSSA). The Extracellular segment spans residues 23-256 (AVDTFIYGGC…NNDDDEIEKT (234 aa)). Gnk2-homologous domains lie at 25–132 (DTFI…NTTF) and 137–234 (DKTV…ARGG). Disulfide bonds link Cys-32–Cys-110, Cys-84–Cys-95, Cys-98–Cys-123, Cys-145–Cys-212, Cys-188–Cys-197, and Cys-200–Cys-225. A helical transmembrane segment spans residues 257–277 (LAIIVGLIAGVTLLVVFLSFM). The tract at residues 257–277 (LAIIVGLIAGVTLLVVFLSFM) is necessary and sufficient for plasmodesmal targeting. Over 278-288 (AKSCERGKGGK) the chain is Cytoplasmic.

Belongs to the cysteine-rich repeat secretory protein family. Plasmodesmata-located proteins (PDLD) subfamily. In terms of assembly, (Microbial infection) Interacts with Grapevine fanleaf virus (GFLV) 2B-MP. As to expression, highly expressed in inflorescence silique (at mRNA level).

It is found in the cell membrane. Its subcellular location is the cell junction. The protein resides in the plasmodesma. In terms of biological role, modulates cell-to-cell trafficking. The sequence is that of Plasmodesmata-located protein 6 from Arabidopsis thaliana (Mouse-ear cress).